We begin with the raw amino-acid sequence, 201 residues long: Probable molybdenum cofactor guanylyltransferase (201 aa).

Residues 6 to 8 (LAG), Lys-18, Asp-67, and Asp-92 contribute to the GTP site. Residue Asp-92 coordinates Mg(2+).

It belongs to the MobA family. Requires Mg(2+) as cofactor.

It is found in the cytoplasm. It carries out the reaction Mo-molybdopterin + GTP + H(+) = Mo-molybdopterin guanine dinucleotide + diphosphate. Transfers a GMP moiety from GTP to Mo-molybdopterin (Mo-MPT) cofactor (Moco or molybdenum cofactor) to form Mo-molybdopterin guanine dinucleotide (Mo-MGD) cofactor. In Thermococcus kodakarensis (strain ATCC BAA-918 / JCM 12380 / KOD1) (Pyrococcus kodakaraensis (strain KOD1)), this protein is Probable molybdenum cofactor guanylyltransferase.